Consider the following 171-residue polypeptide: Sec-independent protein translocase protein TatB (171 aa).

A helical transmembrane segment spans residues 2–22 (FDGIGFMELLLIGVLGLVVLG). The disordered stretch occupies residues 69-171 (SKGLSNLSPE…DTRSNPKANG (103 aa)). A compositionally biased stretch (polar residues) spans 88–97 (QAAQSVNRPY). Low complexity-rich tracts occupy residues 114-130 (HSPV…HTSP) and 138-158 (PTAT…SEPS). A compositionally biased stretch (polar residues) spans 160–171 (GADTRSNPKANG).

It belongs to the TatB family. The Tat system comprises two distinct complexes: a TatABC complex, containing multiple copies of TatA, TatB and TatC subunits, and a separate TatA complex, containing only TatA subunits. Substrates initially bind to the TatABC complex, which probably triggers association of the separate TatA complex to form the active translocon.

Its subcellular location is the cell inner membrane. In terms of biological role, part of the twin-arginine translocation (Tat) system that transports large folded proteins containing a characteristic twin-arginine motif in their signal peptide across membranes. Together with TatC, TatB is part of a receptor directly interacting with Tat signal peptides. TatB may form an oligomeric binding site that transiently accommodates folded Tat precursor proteins before their translocation. In Shewanella baltica (strain OS185), this protein is Sec-independent protein translocase protein TatB.